A 33-amino-acid chain; its full sequence is Beta-amanitin proprotein (33 aa).

The propeptide occupies 1-10; it reads MSDINATRLP. Residues 11–18 constitute a cross-link (cyclopeptide (Ile-Pro)); that stretch reads IWGIGCDP. The segment at residues 12–16 is a cross-link (2'-cysteinyl-6'-hydroxytryptophan sulfoxide (Trp-Cys)); sequence WGIGC. The propeptide occupies 19 to 33; sequence CVGDDVAALTTRGEA.

The protein belongs to the MSDIN fungal toxin family. Post-translationally, processed by the macrocyclase-peptidase enzyme POPB to yield a toxic cyclic decapeptide. POPB first removes 10 residues from the N-terminus. Conformational trapping of the remaining peptide forces the enzyme to release this intermediate rather than proceed to macrocyclization. The enzyme rebinds the remaining peptide in a different conformation and catalyzes macrocyclization of the N-terminal 8 residues.

Functionally, toxin belonging to the bicyclic octapeptides amatoxins that acts by binding non-competitively to RNA polymerase II and greatly slowing the elongation of transcripts from target promoters. In Amanita rimosa, this protein is Beta-amanitin proprotein.